We begin with the raw amino-acid sequence, 189 residues long: Large ribosomal subunit protein uL5 (189 aa).

The protein belongs to the universal ribosomal protein uL5 family. Part of the 50S ribosomal subunit; part of the 5S rRNA/L5/L18/L25 subcomplex. Contacts the 5S rRNA and the P site tRNA. Forms a bridge to the 30S subunit in the 70S ribosome.

In terms of biological role, this is one of the proteins that bind and probably mediate the attachment of the 5S RNA into the large ribosomal subunit, where it forms part of the central protuberance. In the 70S ribosome it contacts protein S13 of the 30S subunit (bridge B1b), connecting the 2 subunits; this bridge is implicated in subunit movement. Contacts the P site tRNA; the 5S rRNA and some of its associated proteins might help stabilize positioning of ribosome-bound tRNAs. The chain is Large ribosomal subunit protein uL5 from Kocuria rhizophila (strain ATCC 9341 / DSM 348 / NBRC 103217 / DC2201).